The primary structure comprises 214 residues: Histidine biosynthesis bifunctional protein HisIE (214 aa).

The phosphoribosyl-AMP cyclohydrolase stretch occupies residues 1-125; that stretch reads MPATALSLPL…ESIEPPPADT (125 aa). The phosphoribosyl-ATP pyrophosphohydrolase stretch occupies residues 126–214; sequence LSQVYNIVCQ…VYEQLQLRRR (89 aa).

The protein in the N-terminal section; belongs to the PRA-CH family. It in the C-terminal section; belongs to the PRA-PH family.

It localises to the cytoplasm. It carries out the reaction 1-(5-phospho-beta-D-ribosyl)-ATP + H2O = 1-(5-phospho-beta-D-ribosyl)-5'-AMP + diphosphate + H(+). The catalysed reaction is 1-(5-phospho-beta-D-ribosyl)-5'-AMP + H2O = 1-(5-phospho-beta-D-ribosyl)-5-[(5-phospho-beta-D-ribosylamino)methylideneamino]imidazole-4-carboxamide. Its pathway is amino-acid biosynthesis; L-histidine biosynthesis; L-histidine from 5-phospho-alpha-D-ribose 1-diphosphate: step 2/9. It participates in amino-acid biosynthesis; L-histidine biosynthesis; L-histidine from 5-phospho-alpha-D-ribose 1-diphosphate: step 3/9. The protein is Histidine biosynthesis bifunctional protein HisIE of Thermosynechococcus vestitus (strain NIES-2133 / IAM M-273 / BP-1).